A 71-amino-acid chain; its full sequence is Small ribosomal subunit protein bS21 (71 aa).

A compositionally biased stretch (basic residues) spans 48-59 (AKASAVKRHAKK). Positions 48-71 (AKASAVKRHAKKLSRENARRIRLY) are disordered. The segment covering 60-71 (LSRENARRIRLY) has biased composition (basic and acidic residues).

This sequence belongs to the bacterial ribosomal protein bS21 family.

The chain is Small ribosomal subunit protein bS21 from Aeromonas hydrophila subsp. hydrophila (strain ATCC 7966 / DSM 30187 / BCRC 13018 / CCUG 14551 / JCM 1027 / KCTC 2358 / NCIMB 9240 / NCTC 8049).